Here is a 239-residue protein sequence, read N- to C-terminus: tRNA (guanine-N(1)-)-methyltransferase (239 aa).

S-adenosyl-L-methionine is bound by residues Gly-108 and 127–132 (LGDYVL).

It belongs to the RNA methyltransferase TrmD family. As to quaternary structure, homodimer.

The protein localises to the cytoplasm. It carries out the reaction guanosine(37) in tRNA + S-adenosyl-L-methionine = N(1)-methylguanosine(37) in tRNA + S-adenosyl-L-homocysteine + H(+). Its function is as follows. Specifically methylates guanosine-37 in various tRNAs. The chain is tRNA (guanine-N(1)-)-methyltransferase from Streptococcus pneumoniae (strain JJA).